The chain runs to 187 residues: Frataxin, mitochondrial (187 aa).

It belongs to the frataxin family. In terms of assembly, monomer. Oligomer. Interacts with NIFS1.

It localises to the mitochondrion. It carries out the reaction 4 Fe(2+) + O2 + 4 H(+) = 4 Fe(3+) + 2 H2O. In terms of biological role, promotes the biosynthesis of heme as well as the assembly and repair of iron-sulfur clusters by delivering Fe(2+) to proteins involved in these pathways. May play a role in the protection against iron-catalyzed oxidative stress through its ability to catalyze the oxidation of Fe(2+) to Fe(3+). May be able to store large amounts of the metal in the form of a ferrihydrite mineral by oligomerization. Binds to the mitochondrial cysteine desulfurase NIFS1 and increases its activity. The sequence is that of Frataxin, mitochondrial (FH) from Arabidopsis thaliana (Mouse-ear cress).